An 822-amino-acid chain; its full sequence is Nucleolar complex protein 3 (822 aa).

Disordered stretches follow at residues 1–86 (MGTK…DGDD), 106–142 (ANKRKRKAKTTGENDPDQGQSIGLERAYASDTKKEQD), and 172–199 (KPKQKKKNEEEEEDDSEEDGDTEYEDSD). Over residues 13–23 (RAAHLKSKKTP) the composition is skewed to basic residues. The segment covering 35-45 (KRDQLKSKREQ) has biased composition (basic and acidic residues). The short motif at 41–48 (SKREQGQN) is the Nuclear localization signal element. The segment covering 76–86 (PLEEDNEDGDD) has biased composition (acidic residues). Positions 116–126 (TGENDPDQGQS) are enriched in polar residues. The segment covering 181 to 199 (EEEEDDSEEDGDTEYEDSD) has biased composition (acidic residues). Position 187 is a phosphoserine (Ser-187). Thr-193 bears the Phosphothreonine mark. Ser-198 carries the phosphoserine modification. A coiled-coil region spans residues 445–509 (KIKNVNLDAE…NKQAKHQKLT (65 aa)).

This sequence belongs to the CBF/MAK21 family.

The protein resides in the nucleus. Its subcellular location is the nucleolus. The sequence is that of Nucleolar complex protein 3 from Drosophila melanogaster (Fruit fly).